We begin with the raw amino-acid sequence, 223 residues long: Deoxyribose-phosphate aldolase (223 aa).

D89 serves as the catalytic Proton donor/acceptor. K152 serves as the catalytic Schiff-base intermediate with acetaldehyde. K181 (proton donor/acceptor) is an active-site residue.

It belongs to the DeoC/FbaB aldolase family. DeoC type 1 subfamily.

It is found in the cytoplasm. The enzyme catalyses 2-deoxy-D-ribose 5-phosphate = D-glyceraldehyde 3-phosphate + acetaldehyde. It functions in the pathway carbohydrate degradation; 2-deoxy-D-ribose 1-phosphate degradation; D-glyceraldehyde 3-phosphate and acetaldehyde from 2-deoxy-alpha-D-ribose 1-phosphate: step 2/2. Its function is as follows. Catalyzes a reversible aldol reaction between acetaldehyde and D-glyceraldehyde 3-phosphate to generate 2-deoxy-D-ribose 5-phosphate. The protein is Deoxyribose-phosphate aldolase of Bacillus cereus (strain ZK / E33L).